Consider the following 398-residue polypeptide: CCA-adding enzyme (398 aa).

The ATP site is built by Gly32 and Arg35. Residues Gly32 and Arg35 each contribute to the CTP site. Residues Asp45 and Asp47 each coordinate Mg(2+). The ATP site is built by Arg116, Asp159, Arg162, Arg165, and Arg168. Positions 116, 159, 162, 165, and 168 each coordinate CTP.

This sequence belongs to the tRNA nucleotidyltransferase/poly(A) polymerase family. Bacterial CCA-adding enzyme type 3 subfamily. In terms of assembly, homodimer. Requires Mg(2+) as cofactor.

It carries out the reaction a tRNA precursor + 2 CTP + ATP = a tRNA with a 3' CCA end + 3 diphosphate. The enzyme catalyses a tRNA with a 3' CCA end + 2 CTP + ATP = a tRNA with a 3' CCACCA end + 3 diphosphate. In terms of biological role, catalyzes the addition and repair of the essential 3'-terminal CCA sequence in tRNAs without using a nucleic acid template. Adds these three nucleotides in the order of C, C, and A to the tRNA nucleotide-73, using CTP and ATP as substrates and producing inorganic pyrophosphate. tRNA 3'-terminal CCA addition is required both for tRNA processing and repair. Also involved in tRNA surveillance by mediating tandem CCA addition to generate a CCACCA at the 3' terminus of unstable tRNAs. While stable tRNAs receive only 3'-terminal CCA, unstable tRNAs are marked with CCACCA and rapidly degraded. This is CCA-adding enzyme from Lactobacillus gasseri (strain ATCC 33323 / DSM 20243 / BCRC 14619 / CIP 102991 / JCM 1131 / KCTC 3163 / NCIMB 11718 / NCTC 13722 / AM63).